The primary structure comprises 181 residues: Bradykinin potentiating and C-type natriuretic peptides (181 aa).

The N-terminal stretch at 1–23 (MFVSRLAASGLLLLALLAVSLDG) is a signal peptide. Positions 24–27 (KPLQ) are excised as a propeptide. Residues Gln28 and Gln31 each carry the pyrrolidone carboxylic acid modification. The propeptide occupies 41–43 (LVV). At Gln44 the chain carries Pyrrolidone carboxylic acid. The propeptide occupies 50–52 (TQL). At Gln53 the chain carries Pyrrolidone carboxylic acid. Residues 59-159 (AGGTTALREE…ARRLKGLAKK (101 aa)) constitute a propeptide that is removed on maturation. Positions 74-150 (EAALDTPPAG…GGGCGGGGGA (77 aa)) are disordered. Over residues 104-114 (SKGASATSAAS) the composition is skewed to low complexity. A compositionally biased stretch (gly residues) spans 140-150 (AGGGCGGGGGA). A disulfide bond links Cys165 and Cys181.

In the N-terminal section; belongs to the bradykinin-potentiating peptide family. The protein in the C-terminal section; belongs to the natriuretic peptide family. As to expression, venom gland.

It is found in the secreted. In terms of biological role, bradykinin-potentiating peptide both inhibits the activity of the angiotensin-converting enzyme (ACE) and enhances the action of bradykinin by inhibiting the peptidases that inactivate it. It acts as an indirect hypotensive agent. Synthetic Cdt1a, Cdt1b and the short hexapeptide Cdt3 are able to potentiate the hypotensive effect mediated by Bk on the blood pressure of anesthetized rats. Functionally, has a vasorelaxant activity in rat aortic strips and a diuretic potency in anesthetized rats. May act by activating natriuretic receptors (NPR1 and/or NPR2). This Crotalus durissus terrificus (South American rattlesnake) protein is Bradykinin potentiating and C-type natriuretic peptides.